The sequence spans 2898 residues: MEDEQEQRRRKVEAGRAKLANFRQRKTKGDCPNSKKKTAKRKGSAVHASVQEEGSVATPNSELPQGGAVFESPSCSNTLEGTRGASAAQEQEDCELDVTDLQGQQQTQPPPPQTAHSLELEALRLSLNNMHTAQLELTQANLQKEKETALTELREMLNGRRAQELALLQSRQQCELELLREQHAREKEEMALRSGQEAAELKEKLRSEMEKNAQTIETLKQDWESERELCLENLRQELSLKHQSEMEGLQSQFQKELSEQKVELEKIFQAKHEAEVSLKNLEAQHQAAIKKLQEDLQSEHCQYLQDLEQKFREKEKAKELELETLQASYEDLKAQSQEEIRLLWSQLESMKTNREELNGSWDPVLAQASHLEELEHLRSGFAQQQQQERAQHESELEHLRVYFEKKLKDAEKTYQEDLTVFQQRLQEAREDSLESTEISSSCVLPEETSGREGKEPPDPLDLQLGQPKVQESLVEDCQVKLSKAEEKIQQMKEEFQKKEAEWELSREELKREAEERLASMFLELREKAESEKLSIISRFEHRESSMRHLQDQQAAQILDLERSLMEQQGHLRQLEQELTRDDLLPCSQCGQEPAMAQEEKNGALLREKEDCALQLLMAQNRFLEERKEIMEKFAKEQDAFLRDAQEKHNHELQLLQQGHQQQLLALRMELETKHRSELTEQLASSESRRQALLETHVAELQVKHNAEISALEKRHLSNLDELESCYVADVQTIRDEHQQALELLRAELEEQLQKKESCHREMLTQELENLKRQHAEELQSVRDSLRMEMSAQHIENGKGPAADLQGAHQQDPAMALHNEGHLLVEDGDAVLRSVDAEGLLHQAGPQELGDAHTVEMQKSQAELAKPQELQASQDQVAQVRDKVFLLNRELEECRAELEQLQQRRERENQEGTTLICMLRADLELAQGEGKALRDALRRLLDLFGDTLKAAVTLKSRISERAGLLLDHEDAADTSDARLAAAALGDMWSDEGLLEIDRTLPEGAETSSVCEISSHVCESFFISPENTLDCEQPIRRVYQSLSTAVEGLLEMALDSSKQLEEARQLHRCVEREFRHRNEEMAQAMQKQQELLERLREESAAKDRLALELHTAKGLLEGFKVEKVDLQEALGKKEESEQQLILELEDLRKQLQQAARELLTLKEEKSVLWNQKETLTNEAKEREAALQEEVESLTRVQWESRKQSEKDRATLLSQMRVLESELEDQLVQHRGCAQLAEEVATLKQQLAALDKHLRSQRQFMDDQAAEREHEREEFQQEIQRLEGQLRQAARPRPPGPRDSQCVQLDEEVELLQEKLREKLDGFNELVIKKDFADQQLLIQEEEIKRLEETNASIQRQMVQLQEELEKQKKSMEELKEKEILKQENMGDLLLTTVSRSGLDEAGCPMLPQGSSSRGPEAQPDVTERALLQHENEVVHRRNSEIDELKSLIENLQENQRQLQKDKAEEIEQLHEVIEKLQSELSLMGPKVHEVSDPQAGSLHSELACLRGEGLGGQALRSELQAAQAAKEVFGQLLANQAHGHSQALEALQQRLQDAEEVAARHLAELEHCVALREAEVEAMASQIQEFAATLKAKEAIIEQRDLEIDAVNKWKVSHSLELEAILLALAHFRHALEQQTCATPDEPPELRQLRVQCARLSHQLQVLYRPFLKCRMQLDQHQPHVASIGCANPCADDELEQEGVSNRLALAPHSLAAQAKEELEDCPLGKANLMAQVRQLQEELDHRVHSVASRDTNSETCKLQQPNLSENGPRNHCCNGEESKPSPPDDVLNIAKTTWDVIDIIKNQDLLVQVEMPDFPTQEKLTSQGGPFSSQASGHSGSLLPEEAAEPQQDPVRALDLSSWSSPEVVRKDPSLEPQHSLPLTPGVGTVSLHSVDISPDWTDPLLQADVSGLLCYPGKSASGQAPLWAVAPSAGKHHAERTATEKDVEDFIVTSFDSQELLTSPSHELARRSDGSRKSDGPDIAMMLTLGSEGSETPTTDLVAAAAAAVPFSRRFVQSPGAMKEKEIHAKQMKALLQMVFDESHQILALSESQDPSSALNKGEPRDPLDGFPRDSQALSEVTTDKGEKESLETHLTWSEELLRAIQEVFAREQEKAELQPRPYGSNLGDYNSLVQRLEKVIQEQGDPQKVQDHLCLSDRSSLLAEIQALRAQLRMTHLQNQEKLQQLCAALTSTEARGSQREHQLRRQVELLAYKVEQEKCIANELQKTLSKEQETASDVRKRLVVEQNAVQDLKSELHACKQENTSLLESLDKVQQEVLRLRAVLDGKEKELKVVLEELESERGKGQALQAQQEEQQLRYLQREGQSSRALEELKLSLEKQLAQNNQLCVALKHERAAKDNLQKELQIEASRCEALLAQEKGQLSELQKSLEAERSRSLELSEALQHERLLTEQLSRNSQEACARQETQVQHALLRKLKAEKTRALELEAMLEKVQKQAAHTQQQLEAQAQERCVELRREKERELEIQRQRDEHKIEQLQRLVRELRWKEEVSGGNGPCRGSPGRGSLERDQFQEQQQELEKIRQQLLCAAGLLTSFTNHTVDRTIKDWTSSNEKAVSSLMRTLEELKSELSMPTSFQKKMTAELQVQLMNELLSDNDALTKAVGMATREKAELCRTVSRLEKTLKHHTQKGCVLNRQSKSSLKQDGTDLQSSLRHSDPEWHSQTTSGDTNTCNIKMEKLYLHYLRAESFRKALIYQKKYLLLLIGGFQDSEQETLSMIAHLGVFPSKADKKITMSRPFTKFRTAVRVVIAVLRLRFLVKKWQEVDRKGALVHPKSTRHGHRTSQRQRSPSGPRASLPTRDTSSGPTKASRHSPRSAAAGSPGKERSTSTPSSRLERSLTASQDPEHSLTEYIHHLEMIQQRLGGLPPDSTQKSCHQKIKQ.

Residues 1–117 (MEDEQEQRRR…QPPPPQTAHS (117 aa)) are disordered. Over residues 34-44 (SKKKTAKRKGS) the composition is skewed to basic residues. Ser44 is subject to Phosphoserine. Coiled-coil stretches lie at residues 127 to 343 (LNNM…IRLL) and 382 to 434 (AQQQ…DSLE). The disordered stretch occupies residues 429 to 460 (REDSLESTEISSSCVLPEETSGREGKEPPDPL). Residues 448-457 (TSGREGKEPP) are compositionally biased toward basic and acidic residues. Coiled coils occupy residues 468–527 (KVQE…LREK), 611–696 (CALQ…LETH), 727–787 (VADV…SLRM), and 872–939 (SQDQ…LRRL). Ser1022 bears the Phosphoserine mark. Coiled-coil stretches lie at residues 1069–1383 (EREF…QENM), 1429–1482 (NEVV…SLMG), and 1529–1593 (QLLA…AKEA). Phosphoserine is present on Ser1437. 3 disordered regions span residues 1745-1786 (VASR…DDVL), 1815-1880 (TQEK…PLTP), and 1958-1979 (TSPS…GPDI). 2 stretches are compositionally biased toward polar residues: residues 1747 to 1766 (SRDT…SENG) and 1817 to 1834 (EKLT…SGHS). An interaction with CDK5RAP2 region spans residues 1801–1822 (NQDLLVQVEMPDFPTQEKLTSQ). A phosphoserine mark is found at Ser1828, Ser1859, Ser1860, and Ser1959. Basic and acidic residues predominate over residues 1963–1976 (ELARRSDGSRKSDG). A Phosphoserine modification is found at Ser1987. Over residues 2046–2055 (SESQDPSSAL) the composition is skewed to polar residues. Residues 2046 to 2088 (SESQDPSSALNKGEPRDPLDGFPRDSQALSEVTTDKGEKESLE) form a disordered region. Basic and acidic residues-rich tracts occupy residues 2058-2068 (GEPRDPLDGFP) and 2078-2088 (TTDKGEKESLE). Phosphoserine is present on Ser2128. 2 coiled-coil regions span residues 2211–2403 (KVEQ…EALQ) and 2429–2590 (HALL…ELSM). Disordered regions lie at residues 2509–2532 (VSGG…QFQE) and 2653–2684 (NRQS…QTTS). The interaction with NEK2 stretch occupies residues 2545 to 2810 (LCAAGLLTSF…SQRQRSPSGP (266 aa)). Over residues 2653-2671 (NRQSKSSLKQDGTDLQSSL) the composition is skewed to polar residues. The calmodulin-binding stretch occupies residues 2758-2771 (KFRTAVRVVIAVLR). The tract at residues 2787–2898 (ALVHPKSTRH…QKSCHQKIKQ (112 aa)) is disordered. Basic residues predominate over residues 2792 to 2802 (KSTRHGHRTSQ). Residues 2845–2860 (TSTPSSRLERSLTASQ) are compositionally biased toward polar residues. Residues 2861–2874 (DPEHSLTEYIHHLE) are compositionally biased toward basic and acidic residues. Ser2865 bears the Phosphoserine mark.

As to quaternary structure, interacts with DISC1 and PCM1. Binds calmodulin. Interacts with CEP131. Interacts with CDK5RAP2; the interaction is leading to centrosomal localization of PCNT and CDK5RAP2. Interacts with CHD3. Interacts with CHD4; the interaction regulates centrosome integrity. Interacts with NEK2. Interacts with CCDC13. Interacts with CEP68. Interacts with ATF5; the ATF5:PCNT:polyglutamylated tubulin (PGT) tripartite unites the mother centriole and the pericentriolar material (PCM) in the centrosome. Cleaved during mitotis which leads to removal of CDK5RAP2 from the centrosome and promotes centriole disengagement and subsequent centriole separation. The C-terminal fragment is rapidly degraded following cleavage. Post-translationally, ubiquitinated by TRIM43; leading to proteasomal degradation. In terms of tissue distribution, expressed in heart and lung (at protein level). Expressed in kidney, thymus, liver, brain, muscle, testis, spleen, lung and heart.

Its subcellular location is the cytoplasm. It is found in the cytoskeleton. The protein resides in the microtubule organizing center. It localises to the centrosome. Integral component of the filamentous matrix of the centrosome involved in the initial establishment of organized microtubule arrays in both mitosis and meiosis. Plays a role, together with DISC1, in the microtubule network formation. Is an integral component of the pericentriolar material (PCM). May play an important role in preventing premature centrosome splitting during interphase by inhibiting NEK2 kinase activity at the centrosome. This Mus musculus (Mouse) protein is Pericentrin (Pcnt).